Consider the following 341-residue polypeptide: L-threonine 3-dehydrogenase (341 aa).

C38 is a binding site for Zn(2+). Residues T40 and H43 each act as charge relay system in the active site. Zn(2+)-binding residues include H63, E64, C93, C96, C99, and C107. NAD(+)-binding positions include I175, D195, R200, 262–264, and 286–287; these read LGI and IY.

Belongs to the zinc-containing alcohol dehydrogenase family. In terms of assembly, homotetramer. It depends on Zn(2+) as a cofactor.

It is found in the cytoplasm. It catalyses the reaction L-threonine + NAD(+) = (2S)-2-amino-3-oxobutanoate + NADH + H(+). The protein operates within amino-acid degradation; L-threonine degradation via oxydo-reductase pathway; glycine from L-threonine: step 1/2. In terms of biological role, catalyzes the NAD(+)-dependent oxidation of L-threonine to 2-amino-3-ketobutyrate. The chain is L-threonine 3-dehydrogenase from Shewanella sp. (strain ANA-3).